We begin with the raw amino-acid sequence, 469 residues long: Signal recognition particle 54 kDa protein (469 aa).

GTP is bound by residues glycine 104 to threonine 111, aspartate 184 to arginine 188, and threonine 242 to aspartate 245. Disordered regions lie at residues glutamate 388–proline 410 and glutamine 447–aspartate 469. Over residues glutamine 448 to aspartate 469 the composition is skewed to gly residues.

Belongs to the GTP-binding SRP family. SRP54 subfamily. As to quaternary structure, part of the signal recognition particle protein translocation system, which is composed of SRP and FtsY. Archaeal SRP consists of a 7S RNA molecule of 300 nucleotides and two protein subunits: SRP54 and SRP19.

It is found in the cytoplasm. The enzyme catalyses GTP + H2O = GDP + phosphate + H(+). Functionally, involved in targeting and insertion of nascent membrane proteins into the cytoplasmic membrane. Binds to the hydrophobic signal sequence of the ribosome-nascent chain (RNC) as it emerges from the ribosomes. The SRP-RNC complex is then targeted to the cytoplasmic membrane where it interacts with the SRP receptor FtsY. This Haloarcula marismortui (strain ATCC 43049 / DSM 3752 / JCM 8966 / VKM B-1809) (Halobacterium marismortui) protein is Signal recognition particle 54 kDa protein.